The chain runs to 24 residues: Brevinin-1Sa (24 aa).

Cysteine 18 and cysteine 24 are joined by a disulfide.

In terms of tissue distribution, expressed by the skin glands.

The protein resides in the secreted. Functionally, antibacterial activity against Gram-negative bacterium E.coli. This is Brevinin-1Sa from Lithobates sphenocephalus (Southern leopard frog).